We begin with the raw amino-acid sequence, 362 residues long: Probable RNA methyltransferase Tbd_1951 (362 aa).

The active-site Proton acceptor is the E89. The region spanning L92 to D318 is the Radical SAM core domain. C99 and C323 are disulfide-bonded. C106, C110, and C113 together coordinate [4Fe-4S] cluster. S-adenosyl-L-methionine is bound by residues G151–E152, S181, S204–H206, and N280. C323 acts as the S-methylcysteine intermediate in catalysis. The disordered stretch occupies residues L342–G362. Over residues P343–G362 the composition is skewed to low complexity.

This sequence belongs to the radical SAM superfamily. RlmN family. It depends on [4Fe-4S] cluster as a cofactor.

It is found in the cytoplasm. This Thiobacillus denitrificans (strain ATCC 25259 / T1) protein is Probable RNA methyltransferase Tbd_1951.